The chain runs to 68 residues: 1-carboxybiuret hydrolase subunit AtzG (68 aa).

Heterotetramer consisting of 2 AtzE and 2 AtzG subunits.

It participates in xenobiotic degradation; atrazine degradation. Functionally, important for the activity of the AtzE subunit of 1-carboxybiuret hydrolase. This is 1-carboxybiuret hydrolase subunit AtzG from Pseudomonas sp. (strain ADP).